The chain runs to 264 residues: Taurine import ATP-binding protein TauB (264 aa).

In terms of domain architecture, ABC transporter spans 4-233 (LQLERISAQY…RYAAGESARA (230 aa)). 38–45 (GPSGSGKT) lines the ATP pocket.

Belongs to the ABC transporter superfamily. Taurine importer (TC 3.A.1.17.1) family. As to quaternary structure, the complex is composed of two ATP-binding proteins (TauB), two transmembrane proteins (TauC) and a solute-binding protein (TauA).

The protein localises to the cell inner membrane. The enzyme catalyses taurine(out) + ATP + H2O = taurine(in) + ADP + phosphate + H(+). In terms of biological role, part of the ABC transporter complex TauABC involved in taurine import. Responsible for energy coupling to the transport system. The chain is Taurine import ATP-binding protein TauB from Pseudomonas fluorescens (strain ATCC BAA-477 / NRRL B-23932 / Pf-5).